The primary structure comprises 641 residues: ATP-dependent zinc metalloprotease FtsH (641 aa).

The Cytoplasmic portion of the chain corresponds to 1 to 16 (MNKQQKPKRSPLRPDY). Residues 17–37 (LVIVIIILLAIGMYFFFTEMM) traverse the membrane as a helical segment. The Extracellular portion of the chain corresponds to 38–131 (APKVKQFDEF…VSFVPHVSVD (94 aa)). Residues 132–152 (FWNIISTLLLIAAPIVLVVIM) form a helical membrane-spanning segment. At 153 to 641 (FRSMSSQSNK…EVEEDSKKSE (489 aa)) the chain is on the cytoplasmic side. 222-229 (GQPGTGKT) lines the ATP pocket. A Zn(2+)-binding site is contributed by H444. The active site involves E445. H448 and D520 together coordinate Zn(2+).

It in the central section; belongs to the AAA ATPase family. This sequence in the C-terminal section; belongs to the peptidase M41 family. Homohexamer. The cofactor is Zn(2+).

It is found in the cell membrane. In terms of biological role, acts as a processive, ATP-dependent zinc metallopeptidase for both cytoplasmic and membrane proteins. Plays a role in the quality control of integral membrane proteins. In Acholeplasma laidlawii (strain PG-8A), this protein is ATP-dependent zinc metalloprotease FtsH.